A 23-amino-acid chain; its full sequence is Caerin-4.3 (23 aa).

Expressed by the skin parotoid and/or rostral glands.

The protein resides in the secreted. In terms of biological role, antibacterial peptide, that adopts an alpha helical conformation which can disrupt bacterial membranes. Each caerin displays a different antimicrobial specificity. The polypeptide is Caerin-4.3 (Ranoidea caerulea (Green tree frog)).